The following is a 331-amino-acid chain: Glycerophosphodiester phosphodiesterase 1 (331 aa).

Residues 1–2 are Cytoplasmic-facing; it reads MW. The chain crosses the membrane as a helical span at residues 3–23; that stretch reads LWEEQGGLMGPFSFLLLVLLL. At 24–254 the chain is on the lumenal side; it reads LTRSPFNACL…WKQSMFVALD (231 aa). Residues 65 to 331 form the GP-PDE domain; that stretch reads VSAIAHRGGS…SMLEDCTPEF (267 aa). Residues E97 and D99 each coordinate Mg(2+). N168 is a glycosylation site (N-linked (GlcNAc...) asparagine). A Mg(2+)-binding site is contributed by D174. A glycan (N-linked (GlcNAc...) asparagine) is linked at N198. The chain crosses the membrane as a helical span at residues 255–275; sequence ILLDWSMHNILWYLCGVSAFL. At 276–331 the chain is on the cytoplasmic side; that stretch reads AQKDFISPDYVKKWSAKGIQVVAWTVNTFDEKSYYESHLGSSYITDSMLEDCTPEF.

The protein belongs to the glycerophosphoryl diester phosphodiesterase family. As to quaternary structure, interacts with PRAF2. Interacts with RGS16. Mg(2+) is required as a cofactor. N-glycosylated.

The protein resides in the cell membrane. The protein localises to the cytoplasmic vesicle membrane. The catalysed reaction is sn-glycero-3-phospho-1D-myo-inositol + H2O = myo-inositol + sn-glycerol 3-phosphate + H(+). It catalyses the reaction 1-O-(1Z-octadecenyl)-sn-glycero-3-phospho-(N-5Z,8Z,11Z,14Z-eicosatetraenoyl)-ethanolamine + H2O = 1-O-(1Z-octadecenyl)-sn-glycero-3-phosphate + N-(5Z,8Z,11Z,14Z-eicosatetraenoyl)-ethanolamine + H(+). The enzyme catalyses 1-O-(1Z-octadecenyl)-sn-glycero-3-phospho-(N-9Z-octadecenoyl)-ethanolamine + H2O = 1-O-(1Z-octadecenyl)-sn-glycero-3-phosphate + N-(9Z-octadecenoyl) ethanolamine + H(+). It carries out the reaction 1-O-(1Z-octadecenyl)-sn-glycero-3-phospho-N-hexadecanoyl-ethanolamine + H2O = 1-O-(1Z-octadecenyl)-sn-glycero-3-phosphate + N-hexadecanoylethanolamine + H(+). The catalysed reaction is N-(4Z,7Z,10Z,13Z,16Z,19Z)-docosahexaenoyl-sn-glycero-3-phosphoethanolamine + H2O = N-(4Z,7Z,10Z,13Z,16Z,19Z)-docosahexaenoyl ethanolamine + sn-glycerol 3-phosphate + H(+). It catalyses the reaction N-eicosanoyl-sn-glycero-3-phosphoethanolamine + H2O = N-eicosanoyl ethanolamine + sn-glycerol 3-phosphate + H(+). The enzyme catalyses N-hexadecanoyl-sn-glycero-3-phosphoethanolamine + H2O = N-hexadecanoylethanolamine + sn-glycerol 3-phosphate + H(+). It carries out the reaction N-(9Z-octadecenoyl)-sn-glycero-3-phosphoethanolamine + H2O = N-(9Z-octadecenoyl) ethanolamine + sn-glycerol 3-phosphate + H(+). The catalysed reaction is N-(5Z,8Z,11Z,14Z-eicosatetraenoyl)-sn-glycero-3-phosphoethanolamine + H2O = N-(5Z,8Z,11Z,14Z-eicosatetraenoyl)-ethanolamine + sn-glycerol 3-phosphate + H(+). Its activity is regulated as follows. Inhibited by EDTA, calcium chloride, and zinc chloride. Enhanced by magnesium chloride. Glycerophosphodiester phosphodiesterase activity can be modulated by G-protein signaling pathways. Its function is as follows. Hydrolyzes the phosphodiester bond of glycerophosphodiesters such as glycerophosphoinositol (GroPIns) and glycerophosphoethanolamine (GroPEth), to yield a glycerol phosphate and an alcohol. Hydrolyzes glycerophospho-N-acylethanolamines to N-acylethanolamines in the brain and participates in bioactive N-acylethanolamine biosynthesis such as anandamide (an endocannabinoid), N-palmitoylethanolamine (an anti-inflammatory), and N-oleoylethanolamine (an anorexic). In addition, has a lysophospholipase D activity by hydrolyzing N-acyl-lysoplasmenylethanolamine (N-acyl-lysoPlsEt) to N-acylethanolamine. However lysophospholipase D activity is lower than glycerophosphodiester phosphodiesterase activity. Has little or no activity towards glycerophosphocholine. The chain is Glycerophosphodiester phosphodiesterase 1 from Bos taurus (Bovine).